Consider the following 683-residue polypeptide: U4/U6 small nuclear ribonucleoprotein Prp3 (683 aa).

Residues 1–87 form the PWI domain; sequence MALSKRELDE…HSKSSSDRSR (87 aa). Positions 73–107 are enriched in basic and acidic residues; sequence GRSSRHSKSSSDRSRKRELKEVFGDDSEISKESSG. The interval 73–135 is disordered; it reads GRSSRHSKSS…IPGPPSESPG (63 aa). A Glycyl lysine isopeptide (Lys-Gly) (interchain with G-Cter in SUMO2) cross-link involves residue Lys139. Residues 161 to 183 are disordered; that stretch reads SFISPPAPQPKTPSSSQPERLPI. Residue Ser164 is modified to Phosphoserine. Glycyl lysine isopeptide (Lys-Gly) (interchain with G-Cter in SUMO2) cross-links involve residues Lys244 and Lys252. Residues 416-550 form a mediates interaction with SART3 region; sequence NLVEHPAQLN…VHISVYRVRN (135 aa). Ser619 is modified (phosphoserine).

As to quaternary structure, component of the precatalytic spliceosome (spliceosome B complex). Component of the U4/U6-U5 tri-snRNP complex, a building block of the precatalytic spliceosome (spliceosome B complex). The U4/U6-U5 tri-snRNP complex is composed of the U4, U6 and U5 snRNAs and at least PRPF3, PRPF4, PRPF6, PRPF8, PRPF31, SNRNP200, TXNL4A, SNRNP40, SNRPB, SNRPD1, SNRPD2, SNRPD3, SNRPE, SNRPF, SNRPG, DDX23, CD2BP2, PPIH, SNU13, EFTUD2, SART1 and USP39, plus LSM2, LSM3, LSM4, LSM5, LSM6, LSM7 and LSM8. Interacts directly with PRPF4. Part of a heteromeric complex containing PPIH, PRPF3 and PRPF4 that is stable in the absence of RNA. Interacts with SART3; the interaction is direct and recruits the deubiquitinase USP4 to PRPF3. Interacts with PRPF19. Interacts ('Lys-63'-linked polyubiquitinated) with PRPF8 (via the MPN (JAB/Mov34) domain); may stabilize the U4/U6-U5 tri-snRNP complex. Interacts with ERCC6. Ubiquitinated. Undergoes 'Lys-63'-linked polyubiquitination by PRPF19 and deubiquitination by USP4. 'Lys-63'-linked ubiquitination increases the affinity for PRPF8 and may regulate the assembly of the U4/U6-U5 tri-snRNP complex.

Its subcellular location is the nucleus. It localises to the nucleus speckle. Functionally, plays a role in pre-mRNA splicing as component of the U4/U6-U5 tri-snRNP complex that is involved in spliceosome assembly, and as component of the precatalytic spliceosome (spliceosome B complex). The chain is U4/U6 small nuclear ribonucleoprotein Prp3 (Prpf3) from Mus musculus (Mouse).